A 557-amino-acid polypeptide reads, in one-letter code: DNA replication factor Cdt1 (557 aa).

A PIP-box K+4 motif motif is present at residues 1–25 (MAQSRVTDFYACRRPGLTTPRAKSI). The tract at residues 20 to 113 (PRAKSICLTP…VCPSPVKRTK (94 aa)) is disordered. Residue Thr28 is modified to Phosphothreonine; by MAPK8. Ser30 carries the post-translational modification Phosphoserine. The Cyclin-binding motif motif lies at 65–67 (RRL). Residues 69-81 (LPGLDSCPSSLPE) are compositionally biased toward low complexity. A compositionally biased stretch (pro residues) spans 82-106 (PSSPAEPSPPADPSPPADPGSPVCP). Ser107 carries the post-translational modification Phosphoserine; by MAPK8. Positions 163-203 (PSTPDAKVPTEQPCVEKAPAYQRFHALAQPGLPGLVLPYKY) are interaction with GMNN. A Phosphoserine modification is found at Ser392. Residues 397–427 (RSAEPGSPGTSTPPLPATPPATPPAASPSAL) form a disordered region. A compositionally biased stretch (pro residues) spans 407–422 (STPPLPATPPATPPAA). The tract at residues 463–557 (LERLPELARV…LAHHVHAEGL (95 aa)) is interaction with LRWD1.

It belongs to the Cdt1 family. In terms of assembly, interacts with GMNN; the interaction inhibits the binding of the MCM complex to origins of replication. Interacts with MCM6. Interacts with CDC6; are mutually dependent on one another for loading MCM complexes onto chromatin. Interacts with PCNA. Interacts with LRWD1 during G1 phase and during mitosis. Interacts with NDC80 subunit of the NDC80 complex; leading to kinetochore localization. Interacts with KAT7. Interacts with ubiquitin-binding protein FAF1; the interaction is likely to promote CDT1 degradation. Post-translationally, two independent E3 ubiquitin ligase complexes, SCF(SKP2) and the DCX(DTL) complex, mediated CDT1 degradation in S phase. Ubiquitinated by the DCX(DTL) complex, in response to DNA damage, leading to its degradation. Ubiquitination by the DCX(DTL) complex is necessary to ensure proper cell cycle regulation and is PCNA-dependent: interacts with PCNA via its PIP-box, while the presence of the containing the 'K+4' motif in the PIP box, recruit the DCX(DTL) complex, leading to its degradation. Phosphorylation at Thr-28 by CDK2 targets CDT1 for ubiquitynation by SCF(SKP2) E3 ubiquitin ligase and subsequent degradation. The interaction with GMNN protects it against ubiquitination. Deubiquitinated by USP37. Ubiquitinated and degraded by the SCF(FBXO31) complex during the G2 phase to prevent re-replication. In terms of processing, phosphorylation by cyclin A-dependent kinases at Thr-28 targets CDT1 for ubiquitynation by SCF(SKP2) E3 ubiquitin ligase and subsequent degradation. Phosphorylated at Thr-28 by MAPK8/JNK1, which blocks replication licensing in response to stress. Binding to GMNN is not affected by phosphorylation.

It is found in the nucleus. The protein localises to the chromosome. It localises to the centromere. The protein resides in the kinetochore. In terms of biological role, required for both DNA replication and mitosis. DNA replication licensing factor, required for pre-replication complex assembly. Cooperates with CDC6 and the origin recognition complex (ORC) during G1 phase of the cell cycle to promote the loading of the mini-chromosome maintenance (MCM) complex onto DNA to generate pre-replication complexes (pre-RC). Required also for mitosis by promoting stable kinetochore-microtubule attachments. Potential oncogene. This chain is DNA replication factor Cdt1, found in Mus musculus (Mouse).